Consider the following 546-residue polypeptide: ATP-dependent rRNA helicase RRP3 (546 aa).

A disordered region spans residues 1 to 108 (MSDFKRRKLE…DEEAEAQAAA (108 aa)). 2 stretches are compositionally biased toward acidic residues: residues 60–77 (SEED…EEED) and 94–103 (EAEQSDEEAE). A Q motif motif is present at residues 115–143 (KTFADLGVREELCDACENLGYKTATPIQT). The Helicase ATP-binding domain occupies 146 to 318 (IPLALAGKDI…RAALKNPVRV (173 aa)). 159-166 (AETGSGKT) provides a ligand contact to ATP. Positions 265–268 (DEAD) match the DEAD box motif. The Helicase C-terminal domain maps to 342-490 (YKDLYLIHLL…EEKVSRDEVM (149 aa)). Positions 504 to 515 (VREMKDLHDQRK) are enriched in basic and acidic residues. The interval 504–546 (VREMKDLHDQRKSGRGGRGGGRGGGRGGRGRGGRRDNMDMDEG) is disordered. Residues 519–530 (GGRGGGRGGGRG) are compositionally biased toward gly residues. The segment covering 536–546 (GRRDNMDMDEG) has biased composition (basic and acidic residues).

This sequence belongs to the DEAD box helicase family. DDX47/RRP3 subfamily. Interacts with the SSU processome.

It is found in the nucleus. The enzyme catalyses ATP + H2O = ADP + phosphate + H(+). Functionally, ATP-dependent rRNA helicase required for pre-ribosomal RNA processing. Involved in the maturation of the 35S-pre-rRNA and to its cleavage to mature 18S rRNA. The sequence is that of ATP-dependent rRNA helicase RRP3 from Phaeosphaeria nodorum (strain SN15 / ATCC MYA-4574 / FGSC 10173) (Glume blotch fungus).